Consider the following 260-residue polypeptide: MSKFWLLLLLVAAFQFAHSYPAAEYELDETTNDEVRQFIGDGYFEDEGDDGDEERFKIKPGKVLDKFGKIVGKVLKQLKKVSAVAKVAMKKGAALLKKMGVKISPLKCEEKTCKSCVIFKIPTENSFCLTIRFMKTNIATYLVVAGEINRKSKFEEKLKLGNMPRCVNVEGFIGKVCMKGIEGHAKSSSGQANVNFCLGLVAEKFGVGAKLCGIYANKKVRVKISPQLFPGATSLDGDIVKLDDNGEDATTLDVDEVEID.

The first 19 residues, 1–19 (MSKFWLLLLLVAAFQFAHS), serve as a signal peptide directing secretion. Positions 20–55 (YPAAEYELDETTNDEVRQFIGDGYFEDEGDDGDEER) are cleaved as a propeptide — removed in mature form, probably by the serine protease triapsin.

It belongs to the redulysin-like family. In terms of tissue distribution, expressed in salivary glands.

The protein resides in the secreted. It is found in the target cell membrane. Functionally, pore-forming protein that induces lysis of T.cruzi trypomastigotes, bacteria E.coli and human red blood cells. The parasite lysis is much more important than the hemolysis, probably due to difference in membrane composition. Its action on protozoan parasites and bacteria may indicate a role in the control of microorganism growth in the salivary glands. The chain is Trialysin from Triatoma infestans (Assassin bug).